Here is a 405-residue protein sequence, read N- to C-terminus: Sialic acid transporter NanX (405 aa).

At 1–20 (MATAWYKQVNPPQRKALFSA) the chain is on the cytoplasmic side. The chain crosses the membrane as a helical span at residues 21–41 (WLGYVFDGFDFMMIFYILHII). The Periplasmic portion of the chain corresponds to 42–53 (KADLGITDIQAT). Residues 54 to 74 (LIGTVAFIARPIGGGFFGAMA) traverse the membrane as a helical segment. Topologically, residues 75-80 (DKYGRK) are cytoplasmic. The helical transmembrane segment at 81 to 101 (PMMMWAIFIYSVGTGLSGIAT) threads the bilayer. Asn102 is a topological domain (periplasmic). The chain crosses the membrane as a helical span at residues 103 to 123 (LYMLAVCRFIVGLGMSGEYAC). Over 124-139 (ASTYAVESWPKNLQSK) the chain is Cytoplasmic. The chain crosses the membrane as a helical span at residues 140-160 (ASAFLVSGFSVGNIIAAQIIP). At 161–164 (QFAE) the chain is on the periplasmic side. A helical transmembrane segment spans residues 165 to 185 (VYGWRNSFFIGLLPVLLVLWI). At 186-214 (RKSAPESQEWIEDKYKDKSTFLSVFRKPH) the chain is on the cytoplasmic side. The helical transmembrane segment at 215-235 (LSISMIVFLVCFCLFGANWPI) threads the bilayer. The Periplasmic portion of the chain corresponds to 236–250 (NGLLPSYLADNGVNT). Residues 251-271 (VVISTLMTIAGLGTLTGTIFF) traverse the membrane as a helical segment. At 272-282 (GFVGDKIGVKK) the chain is on the cytoplasmic side. The helical transmembrane segment at 283–303 (AFVVGLITSFIFLCPLFFISV) threads the bilayer. At 304 to 307 (KNSS) the chain is on the periplasmic side. Residues 308–328 (LIGLCLFGLMFTNLGIAGLVP) form a helical membrane-spanning segment. The Cytoplasmic segment spans residues 329-344 (KFIYDYFPTKLRGLGT). A helical transmembrane segment spans residues 345–365 (GLIYNLGATGGMAAPVLATYI). The Periplasmic portion of the chain corresponds to 366-371 (SGYYGL). The helical transmembrane segment at 372 to 392 (GVSLFIVTVAFSALLILLVGF) threads the bilayer. Residues 393 to 405 (DIPGKIYKLSVAK) are Cytoplasmic-facing.

This sequence belongs to the major facilitator superfamily. Sugar transporter (TC 2.A.1.1) family.

The protein resides in the cell inner membrane. Its function is as follows. Probably transports across the inner membrane the two dehydrated forms of N-acetylneuraminate (Neu5Ac), 2,7-anhydro-N-acetylneuraminate (2,7-AN) and 2-deoxy-2,3-didehydro-N-acetylneuraminate (2,3-EN). This Escherichia coli (strain K12) protein is Sialic acid transporter NanX.